A 217-amino-acid chain; its full sequence is LexA repressor (217 aa).

Positions 28-48 (RAEIAAEFGFSSPNAAEEHLR) form a DNA-binding region, H-T-H motif. Residues Ser136 and Lys173 each act as for autocatalytic cleavage activity in the active site.

This sequence belongs to the peptidase S24 family. In terms of assembly, homodimer.

It catalyses the reaction Hydrolysis of Ala-|-Gly bond in repressor LexA.. Functionally, represses a number of genes involved in the response to DNA damage (SOS response), including recA and lexA. In the presence of single-stranded DNA, RecA interacts with LexA causing an autocatalytic cleavage which disrupts the DNA-binding part of LexA, leading to derepression of the SOS regulon and eventually DNA repair. The polypeptide is LexA repressor (Cupriavidus necator (strain ATCC 17699 / DSM 428 / KCTC 22496 / NCIMB 10442 / H16 / Stanier 337) (Ralstonia eutropha)).